Here is a 100-residue protein sequence, read N- to C-terminus: Protein RnfH (100 aa).

It belongs to the UPF0125 (RnfH) family.

This chain is Protein RnfH, found in Actinobacillus succinogenes (strain ATCC 55618 / DSM 22257 / CCUG 43843 / 130Z).